The sequence spans 101 residues: Small ribosomal subunit protein uS14 (101 aa).

It belongs to the universal ribosomal protein uS14 family. Part of the 30S ribosomal subunit. Contacts proteins S3 and S10.

In terms of biological role, binds 16S rRNA, required for the assembly of 30S particles and may also be responsible for determining the conformation of the 16S rRNA at the A site. The chain is Small ribosomal subunit protein uS14 from Pseudoalteromonas atlantica (strain T6c / ATCC BAA-1087).